The primary structure comprises 1304 residues: DNA-directed RNA polymerase subunit beta' (1304 aa).

Positions 1 to 23 are disordered; the sequence is MSEKGRFSAGLSRQAADGNKADA. The Zn(2+) site is built by cysteine 241, cysteine 315, cysteine 322, and cysteine 325. Over residues 1256 to 1268 the composition is skewed to acidic residues; sequence AAEPEPDEEEEEP. The segment at 1256 to 1304 is disordered; the sequence is AAEPEPDEEEEEPAVLPELPPRLILEDDQLIDDSTPAFDELEEDDDEEE. Residues 1269–1278 are compositionally biased toward low complexity; the sequence is AVLPELPPRL. Acidic residues predominate over residues 1294 to 1304; it reads DELEEDDDEEE.

It belongs to the RNA polymerase beta' chain family. RpoC2 subfamily. In terms of assembly, in cyanobacteria the RNAP catalytic core is composed of 2 alpha, 1 beta, 1 beta', 1 gamma and 1 omega subunit. When a sigma factor is associated with the core the holoenzyme is formed, which can initiate transcription. Zn(2+) is required as a cofactor.

It carries out the reaction RNA(n) + a ribonucleoside 5'-triphosphate = RNA(n+1) + diphosphate. Functionally, DNA-dependent RNA polymerase catalyzes the transcription of DNA into RNA using the four ribonucleoside triphosphates as substrates. This chain is DNA-directed RNA polymerase subunit beta', found in Synechococcus sp. (strain JA-2-3B'a(2-13)) (Cyanobacteria bacterium Yellowstone B-Prime).